Reading from the N-terminus, the 316-residue chain is Thymidylate synthase (316 aa).

DUMP is bound by residues R23 and 178–179 (RR). The active-site Nucleophile is C198. DUMP contacts are provided by residues 218 to 221 (RSGD), N229, and 259 to 261 (HIY). D221 serves as a coordination point for (6R)-5,10-methylene-5,6,7,8-tetrahydrofolate. A315 is a binding site for (6R)-5,10-methylene-5,6,7,8-tetrahydrofolate.

It belongs to the thymidylate synthase family. Bacterial-type ThyA subfamily. Homodimer.

Its subcellular location is the cytoplasm. The enzyme catalyses dUMP + (6R)-5,10-methylene-5,6,7,8-tetrahydrofolate = 7,8-dihydrofolate + dTMP. It functions in the pathway pyrimidine metabolism; dTTP biosynthesis. Functionally, catalyzes the reductive methylation of 2'-deoxyuridine-5'-monophosphate (dUMP) to 2'-deoxythymidine-5'-monophosphate (dTMP) while utilizing 5,10-methylenetetrahydrofolate (mTHF) as the methyl donor and reductant in the reaction, yielding dihydrofolate (DHF) as a by-product. This enzymatic reaction provides an intracellular de novo source of dTMP, an essential precursor for DNA biosynthesis. This chain is Thymidylate synthase, found in Pediococcus pentosaceus (strain ATCC 25745 / CCUG 21536 / LMG 10740 / 183-1w).